The following is a 192-amino-acid chain: Large ribosomal subunit protein uL5 (192 aa).

Belongs to the universal ribosomal protein uL5 family. As to quaternary structure, part of the 50S ribosomal subunit; part of the 5S rRNA/L5/L18/L25 subcomplex. Contacts the 5S rRNA and the P site tRNA. Forms a bridge to the 30S subunit in the 70S ribosome.

Its function is as follows. This is one of the proteins that bind and probably mediate the attachment of the 5S RNA into the large ribosomal subunit, where it forms part of the central protuberance. In the 70S ribosome it contacts protein S13 of the 30S subunit (bridge B1b), connecting the 2 subunits; this bridge is implicated in subunit movement. Contacts the P site tRNA; the 5S rRNA and some of its associated proteins might help stabilize positioning of ribosome-bound tRNAs. The protein is Large ribosomal subunit protein uL5 of Sphingopyxis alaskensis (strain DSM 13593 / LMG 18877 / RB2256) (Sphingomonas alaskensis).